Consider the following 343-residue polypeptide: Transmembrane protein 120A (343 aa).

The Cytoplasmic segment spans residues 1–135; that stretch reads MQSPPPDPLG…KFAYKDEYEK (135 aa). Residue K130 participates in CoA binding. A helical membrane pass occupies residues 136–156; the sequence is FKLYLTIILIVISFTCRFLLN. Residues 157 to 162 are Extracellular-facing; sequence SRVTDA. A helical membrane pass occupies residues 163 to 183; the sequence is AFNFLLVWYYCTLTIRESILI. At 184-190 the chain is on the cytoplasmic side; that stretch reads NNGSRIK. CoA-binding residues include S187 and R188. Residues 191–211 traverse the membrane as a helical segment; that stretch reads GWWVFHHYVSTFLSGVMLTWP. Over 212 to 222 the chain is Extracellular; it reads DGLMYQKFRNQ. The chain crosses the membrane as a helical span at residues 223 to 240; the sequence is FLSFSMYQSFVQFLQYYY. Positions 237, 240, 241, and 283 each coordinate CoA. Topologically, residues 241–273 are cytoplasmic; that stretch reads QSGCLYRLRALGERHTMDLTVEGFQSWMWRGLT. Residues 274–294 form a helical membrane-spanning segment; sequence FLLPFLFFGHFWQLFNALTLF. Residues 295–305 are Extracellular-facing; sequence NLARDPECKEW. A helical membrane pass occupies residues 306–326; sequence QVLMCGFPFLLLFLGNFFTTL. At 327–343 the chain is on the cytoplasmic side; it reads RVVHQKFHSQQHGNKKD. K332 is a CoA binding site.

It belongs to the TMEM120 family. Homodimer. Forms heterooligomer with TMEM120B. Interacts with PKD2; TMEM120A inhibits PKD2 channel activity through the physical association of PKD2 with TMEM120A. In terms of tissue distribution, widely expressed, with higher expression in the heart, kidneys, colon and sensory neurons of the dorsal root ganglia. Expressed in nociceptors. Highly expressed in white adipose tissue (at protein level). Highly expressed in brown adipose tissue and expressed at low levels in liver.

It localises to the cell membrane. It is found in the nucleus envelope. Its subcellular location is the nucleus inner membrane. The protein resides in the endoplasmic reticulum. Multifunctional protein involved in mechanosensation, and plays an essential role in lipid metabolism and adipocyte differentiation. May function as a potential ion channel involved in sensing mechanical stimuli. Mediates the mechanosensitivity of the PKD2-TMEM120A channel complex through direct physical interaction. TMEM120A seems to affect mechanosensation by inhibiting PIEZO2 channels, possibly by altering cellular lipid content. TMEM120A is structurally similar to a lipid-modifying enzyme, ELOVL7, and contains a bound coenzyme A molecule, which suggests it might function as an enzyme in lipid metabolism. The chain is Transmembrane protein 120A from Mus musculus (Mouse).